A 67-amino-acid chain; its full sequence is Bowman-Birk type proteinase inhibitor 1 (67 aa).

7 disulfides stabilise this stretch: Cys-5–Cys-59, Cys-6–Cys-21, Cys-9–Cys-55, Cys-11–Cys-19, Cys-29–Cys-36, Cys-33–Cys-48, and Cys-38–Cys-46.

Belongs to the Bowman-Birk serine protease inhibitor family. In terms of assembly, monomer. Although dimerization may occur in solution. In terms of tissue distribution, seed.

In terms of biological role, inhibits trypsin but not chymotrypsin. The inhibitor consists of 2 domains and has 2 sites of interaction with trypsin. The sequence is that of Bowman-Birk type proteinase inhibitor 1 from Dioclea glabra.